Reading from the N-terminus, the 244-residue chain is Protein crossbronx (244 aa).

The UBC core domain maps to 20-176; sequence QQEYKILAEY…VLENIKESKE (157 aa).

This sequence belongs to the ubiquitin-conjugating enzyme family. FTS subfamily.

The chain is Protein crossbronx (cbx) from Drosophila persimilis (Fruit fly).